The sequence spans 424 residues: 5,5'-dehydrodivanillate O-demethylase oxygenase subunit (424 aa).

Positions 27-135 constitute a Rieske domain; sequence WHPIGGESEF…VRALGGLLWA (109 aa). [2Fe-2S] cluster contacts are provided by cysteine 68, histidine 70, cysteine 87, and histidine 90. Residues histidine 181, histidine 186, and aspartate 306 each contribute to the Fe cation site.

It belongs to the bacterial ring-hydroxylating dioxygenase alpha subunit family. In terms of assembly, homotrimer. The three-component monooxygenase is composed of an oxygenase (LigXa), a ferredoxin (LigXc) and a ferredoxin reductase (LigXd). [2Fe-2S] cluster is required as a cofactor. The cofactor is Fe cation.

The catalysed reaction is 5,5'-dehydrodivanillate + NADH + O2 + H(+) = 2,2',3-trihydroxy-3'-methoxy-5,5'-dicarboxybiphenyl + formaldehyde + NAD(+) + H2O. In terms of biological role, involved in the catabolism of 5,5'-dehydrodivanillate (DDVA), an intermediate in the biodegradation of lignin. Part of a three-component monooxygenase that catalyzes the O-demethylation of DDVA, leading to the formation of 2,2',3-trihydroxy-3'-methoxy-5,5'-dicarboxybiphenyl (OH-DDVA). This is 5,5'-dehydrodivanillate O-demethylase oxygenase subunit from Sphingobium sp. (strain NBRC 103272 / SYK-6).